Here is a 308-residue protein sequence, read N- to C-terminus: Polyprenyl-phosphate transporter (308 aa).

8 helical membrane-spanning segments follow: residues 15-35, 69-89, 91-111, 130-150, 163-183, 200-220, 228-248, and 282-302; these read GLAM…IAFI, INGL…ATLA, LISW…FGLI, LLWL…KPLH, AIAI…LLLI, ILLI…HILS, DVTL…IWPW, and PSQW…VLGL.

This sequence belongs to the PopT family.

It localises to the cell inner membrane. Active in alkaline conditions. Functionally, flippase that catalyzes the transport of undecaprenyl phosphate (UndP) across the cytoplasmic membrane, from the external side to the cytoplasmic side. Is involved in UndP recycling during peptidoglycan synthesis. Required for cell shape maintenance at alkaline pH and peptidoglycan maintenance. Required by the cholera pathogen for growth and cell shape maintenance in the intestine. The polypeptide is Polyprenyl-phosphate transporter (Vibrio cholerae serotype O1 (strain ATCC 39315 / El Tor Inaba N16961)).